The chain runs to 505 residues: Deoxyguanosinetriphosphate triphosphohydrolase (505 aa).

Positions 66–273 constitute an HD domain; the sequence is RLTHSMEVQQ…MEAADDISYC (208 aa).

It belongs to the dGTPase family. Type 1 subfamily. Homotetramer. It depends on Mg(2+) as a cofactor.

It carries out the reaction dGTP + H2O = 2'-deoxyguanosine + triphosphate + H(+). Its function is as follows. dGTPase preferentially hydrolyzes dGTP over the other canonical NTPs. The polypeptide is Deoxyguanosinetriphosphate triphosphohydrolase (Salmonella arizonae (strain ATCC BAA-731 / CDC346-86 / RSK2980)).